Consider the following 346-residue polypeptide: MVGGGGKRRPGGEGPQCEKTTDVKKSKFCEADVSSDLRKEVENHYKLSLPEDFYHFWKFCEELDPEKPSDSLSASLGLQLVGPYDILAGKHKTKKKSTGLNFNLHWRFYYDPPEFQTIIIGDNKTQYHMGYFRDSPDEFPVYVGINEAKKNCIIVPNGDNVFAAVKLFLTKKLREITDKKKINLLKNIDEKLTEAARELGYSLEQRTVKMKQRDKKVVTKTFHGAGLVVPVDKNDVGYRELPETDADLKRICKTIVEAASDEERLKAFAPIQEMMTFVQFANDECDYGMGLELGMDLFCYGSHYFHKVAGQLLPLAYNLLKRNLFAEIIEEHLANRSQENIDQLAA.

M1 is modified (N-acetylmethionine). Positions 1 to 23 (MVGGGGKRRPGGEGPQCEKTTDV) are disordered. K19 carries the N6-acetyllysine modification. S97 is modified (ADP-ribosylserine). K186 and K233 each carry N6-acetyllysine. D235 carries the post-translational modification PolyADP-ribosyl aspartic acid. At Y238 the chain carries ADP-ribosyltyrosine. E240 bears the PolyADP-ribosyl glutamic acid mark. Residues 242–346 (PETDADLKRI…SQENIDQLAA (105 aa)) are interaction with PARP1. The active-site Proton donor is E284.

This sequence belongs to the HPF1 family. Interacts with PARP1 (via the PARP catalytic domain). Interacts with PARP2 (via the PARP catalytic domain). Interacts with core nucleosomes in a PARP1- and PARP2-dependent manner.

The protein localises to the chromosome. It is found in the nucleus. Its function is as follows. Cofactor for serine ADP-ribosylation that confers serine specificity on PARP1 and PARP2 and plays a key role in DNA damage response. Initiates the repair of double-strand DNA breaks: recruited to DNA damage sites by PARP1 and PARP2 and switches the amino acid specificity of PARP1 and PARP2 from aspartate or glutamate to serine residues, licensing serine ADP-ribosylation of target proteins. Serine ADP-ribosylation of target proteins, such as histones, promotes decompaction of chromatin and the recruitment of repair factors leading to the reparation of DNA strand breaks. Serine ADP-ribosylation of proteins constitutes the primary form of ADP-ribosylation of proteins in response to DNA damage. HPF1 acts by completing the active site of PARP1 and PARP2: forms a composite active site composed of residues from HPF1 and PARP1 or PARP2. While HPF1 promotes the initiation of serine ADP-ribosylation, it restricts the polymerase activity of PARP1 and PARP2 in order to limit the length of poly-ADP-ribose chains. HPF1 also promotes tyrosine ADP-ribosylation, probably by conferring tyrosine specificity on PARP1. The protein is Histone PARylation factor 1 of Homo sapiens (Human).